We begin with the raw amino-acid sequence, 420 residues long: Gamma-glutamyl phosphate reductase (420 aa).

It belongs to the gamma-glutamyl phosphate reductase family.

Its subcellular location is the cytoplasm. The catalysed reaction is L-glutamate 5-semialdehyde + phosphate + NADP(+) = L-glutamyl 5-phosphate + NADPH + H(+). It participates in amino-acid biosynthesis; L-proline biosynthesis; L-glutamate 5-semialdehyde from L-glutamate: step 2/2. Its function is as follows. Catalyzes the NADPH-dependent reduction of L-glutamate 5-phosphate into L-glutamate 5-semialdehyde and phosphate. The product spontaneously undergoes cyclization to form 1-pyrroline-5-carboxylate. The polypeptide is Gamma-glutamyl phosphate reductase (Streptococcus pneumoniae serotype 4 (strain ATCC BAA-334 / TIGR4)).